The following is a 254-amino-acid chain: Triosephosphate isomerase (254 aa).

9–11 (NWK) is a binding site for substrate. Histidine 96 functions as the Electrophile in the catalytic mechanism. Glutamate 168 acts as the Proton acceptor in catalysis. Substrate-binding residues include glycine 174 and serine 213.

The protein belongs to the triosephosphate isomerase family. In terms of assembly, homodimer.

The protein localises to the cytoplasm. It catalyses the reaction D-glyceraldehyde 3-phosphate = dihydroxyacetone phosphate. It participates in carbohydrate biosynthesis; gluconeogenesis. It functions in the pathway carbohydrate degradation; glycolysis; D-glyceraldehyde 3-phosphate from glycerone phosphate: step 1/1. In terms of biological role, involved in the gluconeogenesis. Catalyzes stereospecifically the conversion of dihydroxyacetone phosphate (DHAP) to D-glyceraldehyde-3-phosphate (G3P). This Buchnera aphidicola subsp. Schizaphis graminum (strain Sg) protein is Triosephosphate isomerase.